The chain runs to 320 residues: Annexin A5 (320 aa).

Ala-2 is modified (N-acetylalanine). Annexin repeat units follow at residues 15–86, 87–158, 170–242, and 246–317; these read FDER…ALMK, PSRL…VLLQ, AQVE…AVVK, and SIPA…LLCG. Residue Lys-29 forms a Glycyl lysine isopeptide (Lys-Gly) (interchain with G-Cter in SUMO1); alternate linkage. Lys-29 is covalently cross-linked (Glycyl lysine isopeptide (Lys-Gly) (interchain with G-Cter in SUMO2); alternate). Ser-37 carries the post-translational modification Phosphoserine. N6-acetyllysine is present on residues Lys-70, Lys-76, Lys-79, Lys-97, and Lys-101. Lys-290 is subject to N6-succinyllysine. The [IL]-x-C-x-x-[DE] motif signature appears at 314–320; the sequence is LLCGGED.

This sequence belongs to the annexin family. In terms of assembly, monomer. Binds ATRX and EIF5B. In terms of processing, S-nitrosylation is induced by interferon-gamma and oxidatively-modified low-densitity lipoprotein (LDL(ox)) possibly implicating the iNOS-S100A8/9 transnitrosylase complex.

Functionally, this protein is an anticoagulant protein that acts as an indirect inhibitor of the thromboplastin-specific complex, which is involved in the blood coagulation cascade. This is Annexin A5 (ANXA5) from Macaca fascicularis (Crab-eating macaque).